Consider the following 582-residue polypeptide: Membrane protein insertase YidC (582 aa).

A helical transmembrane segment spans residues 3 to 23 (IQRALVITGIAVVSYLMIQAW). The disordered stretch occupies residues 38-92 (QVAEQGNSSSSDSADLPSVQSQTDNSIPSAQSDNDLPSVSPADIAQPTPSSQRIE). A compositionally biased stretch (low complexity) spans 45–58 (SSSSDSADLPSVQS). The span at 59–74 (QTDNSIPSAQSDNDLP) shows a compositional bias: polar residues. Transmembrane regions (helical) follow at residues 357–377 (TVDY…LVFL), 394–414 (GVGN…AIFF), 464–484 (LGGC…YYVL), 495–515 (FFLW…PILM), and 541–561 (MPMI…LYWL).

Belongs to the OXA1/ALB3/YidC family. Type 1 subfamily. Interacts with the Sec translocase complex via SecD. Specifically interacts with transmembrane segments of nascent integral membrane proteins during membrane integration.

It is found in the cell inner membrane. Required for the insertion and/or proper folding and/or complex formation of integral membrane proteins into the membrane. Involved in integration of membrane proteins that insert both dependently and independently of the Sec translocase complex, as well as at least some lipoproteins. Aids folding of multispanning membrane proteins. The sequence is that of Membrane protein insertase YidC from Alcanivorax borkumensis (strain ATCC 700651 / DSM 11573 / NCIMB 13689 / SK2).